A 415-amino-acid chain; its full sequence is All trans-polyprenyl-diphosphate synthase PDSS1 (415 aa).

The disordered stretch occupies residues 16–35 (PAARSPGPGSPGRAGPLGPS). Residues K134, R137, and H173 each contribute to the isopentenyl diphosphate site. Residues D180 and D184 each contribute to the Mg(2+) site. R190 contacts isopentenyl diphosphate.

Belongs to the FPP/GGPP synthase family. In terms of assembly, heterotetramer composed of 2 PDSS1/DPS1 and 2 PDSS2/DLP1 subunits. Mg(2+) serves as cofactor.

It is found in the mitochondrion. The enzyme catalyses 7 isopentenyl diphosphate + (2E,6E)-farnesyl diphosphate = all-trans-decaprenyl diphosphate + 7 diphosphate. It carries out the reaction 6 isopentenyl diphosphate + (2E,6E)-farnesyl diphosphate = all-trans-nonaprenyl diphosphate + 6 diphosphate. The protein operates within cofactor biosynthesis; ubiquinone biosynthesis. In terms of biological role, heterotetrameric enzyme that catalyzes the condensation of farnesyl diphosphate (FPP), which acts as a primer, and isopentenyl diphosphate (IPP) to produce prenyl diphosphates of varying chain lengths and participates in the determination of the side chain of ubiquinone. Supplies nona and decaprenyl diphosphate, the precursors for the side chain of the isoprenoid quinones ubiquinone-9 (Q9)and ubiquinone-10 (Q10) respectively. The enzyme adds isopentenyl diphosphate molecules sequentially to farnesyl diphosphate with trans stereochemistry. This Homo sapiens (Human) protein is All trans-polyprenyl-diphosphate synthase PDSS1.